Here is a 107-residue protein sequence, read N- to C-terminus: uncharacterized protein (107 aa).

4 helical membrane passes run phenylalanine 9 to glutamate 28, serine 33 to isoleucine 50, leucine 55 to valine 72, and tyrosine 77 to glycine 99.

The protein resides in the cell membrane. This is an uncharacterized protein from Archaeoglobus fulgidus (strain ATCC 49558 / DSM 4304 / JCM 9628 / NBRC 100126 / VC-16).